Reading from the N-terminus, the 497-residue chain is Lysine--tRNA ligase (497 aa).

2 residues coordinate Mg(2+): Glu-409 and Glu-416.

This sequence belongs to the class-II aminoacyl-tRNA synthetase family. As to quaternary structure, homodimer. Requires Mg(2+) as cofactor.

It is found in the cytoplasm. It carries out the reaction tRNA(Lys) + L-lysine + ATP = L-lysyl-tRNA(Lys) + AMP + diphosphate. The chain is Lysine--tRNA ligase from Streptococcus pyogenes serotype M49 (strain NZ131).